The chain runs to 228 residues: Putative lipoprotein LprH (228 aa).

The N-terminal stretch at 1 to 27 (MACLGRPGCRGWAGASLVLVVVLALAA) is a signal peptide. C28 carries the N-palmitoyl cysteine lipid modification. C28 carries the S-diacylglycerol cysteine lipid modification. Residues 191 to 211 (GLAVVPHAVLVLSACGFKPGF) form a helical membrane-spanning segment.

It localises to the cell membrane. In Mycobacterium bovis (strain ATCC BAA-935 / AF2122/97), this protein is Putative lipoprotein LprH (lprH).